A 145-amino-acid polypeptide reads, in one-letter code: MLILVNNPKAKYDYHLMESYCAGIVLKGSEVKALSLGQGSLKEAYVFVKNNELFLEQFTIPPYSFAGPLNHASDRIKKLLLNKHEIKQIINKKQQQSLSVIPSKVFFRNGKIKVEIWLAKPKKKFDKRETIKKKTIRRELEAEYR.

Belongs to the SmpB family.

It localises to the cytoplasm. In terms of biological role, required for rescue of stalled ribosomes mediated by trans-translation. Binds to transfer-messenger RNA (tmRNA), required for stable association of tmRNA with ribosomes. tmRNA and SmpB together mimic tRNA shape, replacing the anticodon stem-loop with SmpB. tmRNA is encoded by the ssrA gene; the 2 termini fold to resemble tRNA(Ala) and it encodes a 'tag peptide', a short internal open reading frame. During trans-translation Ala-aminoacylated tmRNA acts like a tRNA, entering the A-site of stalled ribosomes, displacing the stalled mRNA. The ribosome then switches to translate the ORF on the tmRNA; the nascent peptide is terminated with the 'tag peptide' encoded by the tmRNA and targeted for degradation. The ribosome is freed to recommence translation, which seems to be the essential function of trans-translation. The sequence is that of SsrA-binding protein from Mycoplasma genitalium (strain ATCC 33530 / DSM 19775 / NCTC 10195 / G37) (Mycoplasmoides genitalium).